Consider the following 106-residue polypeptide: Large ribosomal subunit protein eL30 (106 aa).

This sequence belongs to the eukaryotic ribosomal protein eL30 family.

In Methanococcus maripaludis (strain C5 / ATCC BAA-1333), this protein is Large ribosomal subunit protein eL30.